The chain runs to 62 residues: Dual specificity mitogen-activated protein kinase kinase 3 (62 aa).

One can recognise a Protein kinase domain in the interval 1 to 62 (GKIAVSIVKA…VAKTMDAGCK (62 aa)).

It belongs to the protein kinase superfamily. STE Ser/Thr protein kinase family. MAP kinase kinase subfamily. Post-translationally, activated by phosphorylation on Ser/Thr catalyzed by MAP kinase kinase kinases.

It carries out the reaction L-seryl-[protein] + ATP = O-phospho-L-seryl-[protein] + ADP + H(+). The enzyme catalyses L-threonyl-[protein] + ATP = O-phospho-L-threonyl-[protein] + ADP + H(+). It catalyses the reaction L-tyrosyl-[protein] + ATP = O-phospho-L-tyrosyl-[protein] + ADP + H(+). Catalyzes the concomitant phosphorylation of a threonine and a tyrosine residue in a Thr-Glu-Tyr sequence located in MAP kinases. The protein is Dual specificity mitogen-activated protein kinase kinase 3 (map2k3) of Xenopus laevis (African clawed frog).